The chain runs to 375 residues: Glutamate 5-kinase (375 aa).

Lys3 is a binding site for ATP. Residues Ser44, Asp131, and Asn143 each coordinate substrate. ATP is bound by residues Ser163–Asp164 and Thr205–Lys211. The PUA domain occupies Glu269–Arg346.

This sequence belongs to the glutamate 5-kinase family.

The protein localises to the cytoplasm. It catalyses the reaction L-glutamate + ATP = L-glutamyl 5-phosphate + ADP. Its pathway is amino-acid biosynthesis; L-proline biosynthesis; L-glutamate 5-semialdehyde from L-glutamate: step 1/2. In terms of biological role, catalyzes the transfer of a phosphate group to glutamate to form L-glutamate 5-phosphate. This is Glutamate 5-kinase from Rhodospirillum rubrum (strain ATCC 11170 / ATH 1.1.1 / DSM 467 / LMG 4362 / NCIMB 8255 / S1).